Consider the following 411-residue polypeptide: Protein translocase subunit SecY (411 aa).

10 helical membrane passes run 13-33, 52-72, 111-131, 135-155, 163-180, 197-217, 252-272, 291-311, 350-370, and 377-397; these read FTLL…PGID, IFSG…VPYI, ALGW…PYVF, FTFV…IMWL, GIGN…VSGL, SIKF…TIFV, GVMP…LTQL, LYLV…TSIV, FLGA…EKVA, and GLGA…AKQI.

The protein belongs to the SecY/SEC61-alpha family. Component of the plastid Sec protein translocase complex, which is composed of at least SecY, SecE and SecG.

It is found in the plastid. The protein resides in the chloroplast thylakoid membrane. In terms of biological role, the central subunit of the protein translocation channel SecYE. Consists of two halves formed by TMs 1-5 and 6-10. These two domains form a lateral gate at the front which open onto the bilayer between TMs 2 and 7, and are clamped together by SecE at the back. The channel is closed by both a pore ring composed of hydrophobic SecY resides and a short helix (helix 2A) on the extracellular side of the membrane which forms a plug. The polypeptide is Protein translocase subunit SecY (Porphyra purpurea (Red seaweed)).